A 182-amino-acid chain; its full sequence is Adenine phosphoribosyltransferase (182 aa).

Belongs to the purine/pyrimidine phosphoribosyltransferase family. In terms of assembly, homodimer.

It is found in the cytoplasm. The catalysed reaction is AMP + diphosphate = 5-phospho-alpha-D-ribose 1-diphosphate + adenine. It functions in the pathway purine metabolism; AMP biosynthesis via salvage pathway; AMP from adenine: step 1/1. In terms of biological role, catalyzes a salvage reaction resulting in the formation of AMP, that is energically less costly than de novo synthesis. The protein is Adenine phosphoribosyltransferase of Streptomyces coelicolor (strain ATCC BAA-471 / A3(2) / M145).